The following is a 396-amino-acid chain: Protein TOC75-4, chloroplastic (396 aa).

Residues 1–23 (MEAVKEAVRKIKSLVIPHADEKD) are Chloroplast intermembrane-facing. Residues 24–32 (NGIVFEIKL) traverse the membrane as a beta stranded segment. The Cytoplasmic portion of the chain corresponds to 33 to 87 (NETDQRVEKWGLDPSLDFFEVTGNCNLGRPNSEGSNQSLMGSVTIRNIFNPKLDD). A beta stranded membrane pass occupies residues 88-96 (LLSKIEYVR). At 97–140 (FLEAVKKPRNRTFKTSFFNSRKLSPVFTGGPGYEDLVPPMFVGR) the chain is on the chloroplast intermembrane side. Residues 141–148 (DCLKATIT) traverse the membrane as a beta stranded segment. Residues 149–156 (ENLTRQRE) lie on the Cytoplasmic side of the membrane. A beta stranded membrane pass occupies residues 157-164 (LTYGVMFE). The Chloroplast intermembrane portion of the chain corresponds to 165-271 (EIITRDENRR…VEEGSDKPQP (107 aa)). The beta stranded transmembrane segment at 272–280 (PVLVLHGRY) threads the bilayer. The Cytoplasmic portion of the chain corresponds to 281-292 (GGCIGDLPSYDV). The chain crosses the membrane as a beta stranded span at residues 293-301 (FALGGPNSV). Topologically, residues 302–363 (RGYSMGELGA…LYRKMGHGSS (62 aa)) are chloroplast intermembrane. A beta stranded transmembrane segment spans residues 364–370 (YGLGVKL). Residues 371 to 384 (GMVRAEYTVRHNRG) lie on the Cytoplasmic side of the membrane. The chain crosses the membrane as a beta stranded span at residues 385 to 392 (TGALFLRF). Over 393 to 396 (GERY) the chain is Chloroplast intermembrane.

This sequence belongs to the TOC75 family. As to quaternary structure, part of the TOC core complex that includes a protein for the specific recognition of transit peptides surrounded by a ring composed of four proteins forming translocation channels, and four to five GTP-binding proteins providing energy. This core complex can interact with components of the TIC complex to form a larger import complex. Chloroplastic protein precursors also interacts with these complexes. As to expression, expressed ubiquitously at low levels.

The protein localises to the plastid. The protein resides in the chloroplast outer membrane. Functionally, mediates the insertion of proteins targeted to the outer membrane of chloroplasts. Required for the import of protein precursors into chloroplasts. Forms the voltage-dependent preprotein translocation channels (hydrophilic beta barrel) of the TOC complex in the chloroplastic outer membrane. Required for etioplast formation and/or etioplast-chloroplast transition during deetiolation. The polypeptide is Protein TOC75-4, chloroplastic (TOC75-4) (Arabidopsis thaliana (Mouse-ear cress)).